Here is a 303-residue protein sequence, read N- to C-terminus: Deoxyhypusine hydroxylase (303 aa).

Met1 carries the N-acetylmethionine modification. HEAT-like PBS-type repeat units lie at residues 23–49 (ARFR…AFDD), 54–80 (LKHE…VLRD), 87–113 (VRHE…YSTD), 175–201 (DRYR…GLRC), 206–232 (FRHE…ALAQ), and 239–265 (VRHE…HVAD). The Fe cation site is built by His56, His89, and Glu90. Fe cation is bound by residues His208, His241, and Glu242.

This sequence belongs to the deoxyhypusine hydroxylase family. It depends on Fe(2+) as a cofactor.

It carries out the reaction [eIF5A protein]-deoxyhypusine + AH2 + O2 = [eIF5A protein]-hypusine + A + H2O. It participates in protein modification; eIF5A hypusination. In terms of biological role, catalyzes the hydroxylation of the N(6)-(4-aminobutyl)-L-lysine intermediate produced by deoxyhypusine synthase/DHPS on a critical lysine of the eukaryotic translation initiation factor 5A/eIF-5A. This is the second step of the post-translational modification of that lysine into an unusual amino acid residue named hypusine. Hypusination is unique to mature eIF-5A factor and is essential for its function. This is Deoxyhypusine hydroxylase from Bos taurus (Bovine).